A 790-amino-acid polypeptide reads, in one-letter code: MAEQVLPQALYLSNMRKAVKIRERTPEDIFKPTNGIIHHFKTMHRYTLEMFRTCQFCPQFREIIHKALIDKNIQASLESQKKLNWCREVRKLVALKTNGDGNCLMHATSQYMWGVQDTDLVLRKALFSTLKETDTRNFKFRWQLESLKSQEFVETGLCYDTRNWNDEWDNLIKMASTDTPMARSGLQYNSLEEIHIFVLCNILRRPIIVISDKMLRSLESGSNFAPLKVGGIYLPLHWPAQECYRYPIVLGYDSHHFVPLVTLKDSGPEIRAVPLVNRDRGRFEDLKVHFLTDPENEMKEKLLKEYLMVIEIPVQGWDHGTTHLINAAKLDEANLPKEINLVDDYFELVQHEYKKWQENSEQGRSEMHAQNPMESSLPQLSLMDVKCETPNCPFFMSVNTQPLCHECSERRQKNQNKLPKLNSKPGPEGLPGMALGASRGEAYEPLAWNPEEPTGGPHSAPPTAPSPFLFSETTAMKCRSPGCPFTLNVQHNGFCERCHNARQLHASHAADHTRHLDPGKCQACLQDVTRTFNGICSTCFKRTTAEASSSLSTSLPPSCHQRSKSDPSQLVRSPSPHSCHRAGNDAPAGCLSQAARTPGDRTGTSKCRKAGCMYFGTPENKGFCTLCFIEYRENKHLVAASGKASPTASRFQNTIPCLGRECGTLGSTMFEGYCQKCFIEAQNQRFHEAKRTEEQLRSSQRRDVPRTTQSTSRPKCARASCKNILACRSEELCMECQHPNPRMGPGAHRGEPAPEDPPKQRCWAPACDHFGNAKCNGYCNECFQFKQMYG.

Position 2 is an N-acetylalanine (A2). The tract at residues 58 to 300 (PQFREIIHKA…LTDPENEMKE (243 aa)) is TRAF-binding. Residues 92-263 (LVALKTNGDG…SHHFVPLVTL (172 aa)) form the OTU domain. D100 is an active-site residue. The Nucleophile role is filled by C103. 3 interaction with ubiquitin regions span residues 157 to 159 (LCY), 190 to 192 (SLE), and 224 to 227 (FAPL). The active-site Proton acceptor is H256. The interval 369–775 (AQNPMESSLP…ACDHFGNAKC (407 aa)) is interaction with TNIP1. Residues 381–416 (SLMDVKCETPNCPFFMSVNTQPLCHECSERRQKNQN) form an A20-type 1 zinc finger. Residues 386–453 (KCETPNCPFF…EPLAWNPEEP (68 aa)) form an interaction with RIPK1 region. The Zn(2+) site is built by C387, C392, C404, and C407. The tract at residues 415-467 (QNKLPKLNSKPGPEGLPGMALGASRGEAYEPLAWNPEEPTGGPHSAPPTAPSP) is disordered. Position 459 is a phosphoserine (S459). 2 A20-type zinc fingers span residues 472–507 (ETTA…LHAS) and 515–548 (HLDP…AEAS). Residues C478, C483, C495, C498, C521, C524, C536, and C539 each contribute to the Zn(2+) site. Positions 550–580 (SLSTSLPPSCHQRSKSDPSQLVRSPSPHSCH) are disordered. Over residues 566 to 576 (DPSQLVRSPSP) the composition is skewed to polar residues. S575 carries the post-translational modification Phosphoserine. Residues 601–636 (RTGTSKCRKAGCMYFGTPENKGFCTLCFIEYRENKH) form an A20-type 4 zinc finger. Positions 605 to 655 (SKCRKAGCMYFGTPENKGFCTLCFIEYRENKHLVAASGKASPTASRFQNTI) are required for proteasomal degradation of UBE2N and UBE2D3, TRAF6 deubiquitination, and TAX1BP1 interaction with UBE2N. Positions 606–790 (KCRKAGCMYF…ECFQFKQMYG (185 aa)) are sufficient for inhibitory activity of TNF-induced NF-kappa-B activity. Positions 607, 612, 624, and 627 each coordinate Zn(2+). S645 is subject to Phosphoserine. Residues 651–686 (FQNTIPCLGRECGTLGSTMFEGYCQKCFIEAQNQRF) form an A20-type 5 zinc finger. 4 residues coordinate Zn(2+): C657, C662, C674, and C677. Basic and acidic residues predominate over residues 689–705 (AKRTEEQLRSSQRRDVP). The interval 689 to 712 (AKRTEEQLRSSQRRDVPRTTQSTS) is disordered. The required for lysosomal localization and for TRAF2 lysosomal degradation stretch occupies residues 697 to 790 (RSSQRRDVPR…ECFQFKQMYG (94 aa)). A20-type zinc fingers lie at residues 710-745 (STSR…RMGP) and 756-790 (DPPK…QMYG). 8 residues coordinate Zn(2+): C716, C721, C733, C736, C762, C767, C779, and C782.

Belongs to the peptidase C64 family. In terms of assembly, homodimer. Interacts with TNIP1, TAX1BP1 and TRAF2. Interacts with RNF11, ITCH and TAX1BP1 only after TNF stimulation; these interaction are transient and they are lost after 1 hour of stimulation with TNF. Interacts with YWHAZ and YWHAH. Interacts with IKBKG; the interaction is induced by TNF stimulation and by polyubiquitin. Interacts with RIPK1. Interacts with UBE2N; the interaction requires TAX1BP1. Interacts with TRAF6. Proteolytically cleaved by MALT1 upon TCR stimulation; disrupts NF-kappa-B inhibitory function and results in increased IL-2 production. It is proposed that only a fraction of TNFAIP3 colocalized with TCR and CBM complex is cleaved, leaving the main TNFAIP3 pool intact.

The protein resides in the cytoplasm. It is found in the nucleus. It localises to the lysosome. It carries out the reaction Thiol-dependent hydrolysis of ester, thioester, amide, peptide and isopeptide bonds formed by the C-terminal Gly of ubiquitin (a 76-residue protein attached to proteins as an intracellular targeting signal).. Functionally, ubiquitin-editing enzyme that contains both ubiquitin ligase and deubiquitinase activities. Involved in immune and inflammatory responses signaled by cytokines, such as TNF-alpha and IL-1 beta, or pathogens via Toll-like receptors (TLRs) through terminating NF-kappa-B activity. Essential component of a ubiquitin-editing protein complex, comprising also RNF11, ITCH and TAX1BP1, that ensures the transient nature of inflammatory signaling pathways. In cooperation with TAX1BP1 promotes disassembly of E2-E3 ubiquitin protein ligase complexes in IL-1R and TNFR-1 pathways; affected are at least E3 ligases TRAF6, TRAF2 and BIRC2, and E2 ubiquitin-conjugating enzymes UBE2N and UBE2D3. In cooperation with TAX1BP1 promotes ubiquitination of UBE2N and proteasomal degradation of UBE2N and UBE2D3. Upon TNF stimulation, deubiquitinates 'Lys-63'-polyubiquitin chains on RIPK1 and catalyzes the formation of 'Lys-48'-polyubiquitin chains. This leads to RIPK1 proteasomal degradation and consequently termination of the TNF- or LPS-mediated activation of NF-kappa-B. Deubiquitinates TRAF6 probably acting on 'Lys-63'-linked polyubiquitin. Upon T-cell receptor (TCR)-mediated T-cell activation, deubiquitinates 'Lys-63'-polyubiquitin chains on MALT1 thereby mediating disassociation of the CBM (CARD11:BCL10:MALT1) and IKK complexes and preventing sustained IKK activation. Deubiquitinates NEMO/IKBKG; the function is facilitated by TNIP1 and leads to inhibition of NF-kappa-B activation. Upon stimulation by bacterial peptidoglycans, probably deubiquitinates RIPK2. Can also inhibit I-kappa-B-kinase (IKK) through a non-catalytic mechanism which involves polyubiquitin; polyubiquitin promotes association with IKBKG and prevents IKK MAP3K7-mediated phosphorylation. Targets TRAF2 for lysosomal degradation. In vitro able to deubiquitinate 'Lys-11'-, 'Lys-48'- and 'Lys-63' polyubiquitin chains. Inhibitor of programmed cell death. Has a role in the function of the lymphoid system. Required for LPS-induced production of pro-inflammatory cytokines and IFN beta in LPS-tolerized macrophages. This Macaca fascicularis (Crab-eating macaque) protein is Tumor necrosis factor alpha-induced protein 3 (TNFAIP3).